The primary structure comprises 422 residues: Probable protease eep (422 aa).

Histidine 18 is a binding site for Zn(2+). Residue glutamate 19 is part of the active site. Residue histidine 22 coordinates Zn(2+). 3 helical membrane-spanning segments follow: residues 176–196 (FAGPMNNFILGFILFTLAVFL), 349–369 (VVFLMAMLSMNLGIINLLPIP), and 394–414 (EGIITLIGFGFVMVLMVLVTW). In terms of domain architecture, PDZ spans 179-273 (PMNNFILGFI…EEQLTVTPEK (95 aa)).

It belongs to the peptidase M50B family. Zn(2+) serves as cofactor.

The protein localises to the cell membrane. In terms of biological role, involved in production of the peptide pheromone cAD1. This is Probable protease eep (eep) from Enterococcus faecalis (strain ATCC 700802 / V583).